The chain runs to 53 residues: UPF0391 membrane protein BPSS2216 (53 aa).

2 consecutive transmembrane segments (helical) span residues 5-25 (ALVF…GIAA) and 30-50 (IAKI…VLGV).

It belongs to the UPF0391 family.

The protein localises to the cell membrane. This is UPF0391 membrane protein BPSS2216 from Burkholderia pseudomallei (strain K96243).